Here is a 107-residue protein sequence, read N- to C-terminus: Phosphoribosyl-ATP pyrophosphatase (107 aa).

Belongs to the PRA-PH family.

It localises to the cytoplasm. It catalyses the reaction 1-(5-phospho-beta-D-ribosyl)-ATP + H2O = 1-(5-phospho-beta-D-ribosyl)-5'-AMP + diphosphate + H(+). The protein operates within amino-acid biosynthesis; L-histidine biosynthesis; L-histidine from 5-phospho-alpha-D-ribose 1-diphosphate: step 2/9. This Sinorhizobium fredii (strain NBRC 101917 / NGR234) protein is Phosphoribosyl-ATP pyrophosphatase.